The sequence spans 85 residues: Thioredoxin (85 aa).

A Glutaredoxin domain is found at 1-85; that stretch reads MSKVKIELFT…ALVEAIKKRL (85 aa). Cys-14 and Cys-17 are joined by a disulfide.

It belongs to the glutaredoxin family.

Its subcellular location is the cytoplasm. Functionally, acts to maintain redox homeostasis; functions as a protein disulfide reductase. The polypeptide is Thioredoxin (trx) (Methanocaldococcus jannaschii (strain ATCC 43067 / DSM 2661 / JAL-1 / JCM 10045 / NBRC 100440) (Methanococcus jannaschii)).